The following is a 289-amino-acid chain: Oxygen-dependent coproporphyrinogen-III oxidase (289 aa).

Residue Ser-82 participates in substrate binding. His-86 and His-96 together coordinate a divalent metal cation. The Proton donor role is filled by His-96. Residue 98-100 (NYR) coordinates substrate. 2 residues coordinate a divalent metal cation: His-130 and His-160. The interval 224–259 (YVEFNLVWDRGTIFGLQTNGRIESILMSMPPLVRWE) is important for dimerization.

The protein belongs to the aerobic coproporphyrinogen-III oxidase family. Homodimer. Requires a divalent metal cation as cofactor.

The protein resides in the cytoplasm. It carries out the reaction coproporphyrinogen III + O2 + 2 H(+) = protoporphyrinogen IX + 2 CO2 + 2 H2O. It functions in the pathway porphyrin-containing compound metabolism; protoporphyrin-IX biosynthesis; protoporphyrinogen-IX from coproporphyrinogen-III (O2 route): step 1/1. In terms of biological role, involved in the heme and chlorophyll biosynthesis. Catalyzes the aerobic oxidative decarboxylation of propionate groups of rings A and B of coproporphyrinogen-III to yield the vinyl groups in protoporphyrinogen-IX. This Gloeobacter violaceus (strain ATCC 29082 / PCC 7421) protein is Oxygen-dependent coproporphyrinogen-III oxidase.